The following is a 203-amino-acid chain: A-type ATP synthase subunit E (203 aa).

Belongs to the V-ATPase E subunit family. In terms of assembly, might form a homodimer. Interacts with subunit H via residues 41-60. The A-type ATPase is composed of subunits A(3), B(3), C, D, E(1 or 2), F, H(2), I and K(x).

The protein resides in the cell membrane. Functionally, component of the A-type ATP synthase that produces ATP from ADP in the presence of a proton gradient across the membrane. This Methanocaldococcus jannaschii (strain ATCC 43067 / DSM 2661 / JAL-1 / JCM 10045 / NBRC 100440) (Methanococcus jannaschii) protein is A-type ATP synthase subunit E.